Here is a 187-residue protein sequence, read N- to C-terminus: Biogenesis of lysosome-related organelles complex 1 subunit 5 (187 aa).

A disordered region spans residues Met-1–Gly-27. Ser-2 carries the N-acetylserine modification.

Belongs to the BLOC1S5 family. In terms of assembly, octamer composed of one copy each BLOC1S1, BLOC1S2, BLOC1S3, BLOC1S4, BLOC1S5, BLOC1S6, DTNBP1/BLOC1S7 and SNAPIN/BLOC1S8. The BLOC-1 complex associates with the AP-3 protein complex and membrane protein cargos. Interacts with BLOC1S4, BLOC1S6, DTNBP1/BLOC1S7 and PI4K2A. Component of the biogenesis of lysosome-related organelles complex 1 (BLOC-1) composed of BLOC1S1, BLOC1S2, BLOC1S3, BLOC1S4, BLOC1S5, BLOC1S6, DTNBP1/BLOC1S7 and SNAPIN/BLOC1S8.

Component of the BLOC-1 complex, a complex that is required for normal biogenesis of lysosome-related organelles (LRO), such as platelet dense granules and melanosomes. In concert with the AP-3 complex, the BLOC-1 complex is required to target membrane protein cargos into vesicles assembled at cell bodies for delivery into neurites and nerve terminals. The BLOC-1 complex, in association with SNARE proteins, is also proposed to be involved in neurite extension. Plays a role in intracellular vesicle trafficking. This chain is Biogenesis of lysosome-related organelles complex 1 subunit 5 (Bloc1s5), found in Rattus norvegicus (Rat).